A 250-amino-acid polypeptide reads, in one-letter code: Type III pantothenate kinase (250 aa).

6–13 (DVGNTNTV) lines the ATP pocket. A substrate-binding site is contributed by 103–106 (GADR). The Proton acceptor role is filled by Asp-105. Asp-125 provides a ligand contact to K(+). Thr-128 is a binding site for ATP. A substrate-binding site is contributed by Thr-180.

The protein belongs to the type III pantothenate kinase family. In terms of assembly, homodimer. NH4(+) serves as cofactor. It depends on K(+) as a cofactor.

It is found in the cytoplasm. The catalysed reaction is (R)-pantothenate + ATP = (R)-4'-phosphopantothenate + ADP + H(+). It functions in the pathway cofactor biosynthesis; coenzyme A biosynthesis; CoA from (R)-pantothenate: step 1/5. Its function is as follows. Catalyzes the phosphorylation of pantothenate (Pan), the first step in CoA biosynthesis. The sequence is that of Type III pantothenate kinase from Frankia alni (strain DSM 45986 / CECT 9034 / ACN14a).